Here is a 113-residue protein sequence, read N- to C-terminus: Protein Asterix (113 aa).

Residues I81–L97 traverse the membrane as a helical segment.

Belongs to the Asterix family.

It is found in the membrane. This is Protein Asterix from Caenorhabditis elegans.